The primary structure comprises 820 residues: LPS-assembly protein LptD (820 aa).

The disordered stretch occupies residues 1 to 27 (MDLSSLPDPLRPTHSRLPARRRDRAEP). The segment covering 13-22 (THSRLPARRR) has biased composition (basic residues).

Belongs to the LptD family. As to quaternary structure, component of the lipopolysaccharide transport and assembly complex. Interacts with LptE and LptA.

Together with LptE, is involved in the assembly of lipopolysaccharide (LPS) at the surface of the outer membrane. The protein is LPS-assembly protein LptD of Paracidovorax citrulli (strain AAC00-1) (Acidovorax citrulli).